Reading from the N-terminus, the 1383-residue chain is DNA-directed RNA polymerase subunit beta'' (1383 aa).

Residues Cys220, Cys289, Cys296, and Cys299 each contribute to the Zn(2+) site.

This sequence belongs to the RNA polymerase beta' chain family. RpoC2 subfamily. In plastids the minimal PEP RNA polymerase catalytic core is composed of four subunits: alpha, beta, beta', and beta''. When a (nuclear-encoded) sigma factor is associated with the core the holoenzyme is formed, which can initiate transcription. It depends on Zn(2+) as a cofactor.

It localises to the plastid. The protein resides in the chloroplast. It carries out the reaction RNA(n) + a ribonucleoside 5'-triphosphate = RNA(n+1) + diphosphate. In terms of biological role, DNA-dependent RNA polymerase catalyzes the transcription of DNA into RNA using the four ribonucleoside triphosphates as substrates. The polypeptide is DNA-directed RNA polymerase subunit beta'' (Oenothera elata subsp. hookeri (Hooker's evening primrose)).